A 1376-amino-acid chain; its full sequence is Spike glycoprotein (1376 aa).

Positions 1 to 13 (MLFVFILFLPSCL) are cleaved as a signal peptide. At 14-1317 (GYIGDFRCIQ…GTYEMYVKWP (1304 aa)) the chain is on the extracellular side. The 282-residue stretch at 15–296 (YIGDFRCIQT…SYISEIKCKT (282 aa)) folds into the BetaCoV S1-NTD domain. Residues 15–330 (YIGDFRCIQT…RRVPNLPDCK (316 aa)) are receptor binding site. Cystine bridges form between Cys21–Cys158, Cys153–Cys187, Cys165–Cys246, Cys284–Cys294, and Cys329–Cys354. Residues Asn31, Asn60, and Asn134 are each glycosylated (N-linked (GlcNAc...) asparagine; by host). Asn192 carries an N-linked (GlcNAc...) asparagine; by host glycan. The BetaCoV S1-CTD domain occupies 327 to 618 (PDCKIEEWLT…GINSGTTCST (292 aa)). A glycan (N-linked (GlcNAc...) asparagine; by host) is linked at Asn357. Cystine bridges form between Cys372–Cys425 and Cys384–Cys616. Asn435, Asn677, Asn709, Asn717, Asn789, and Asn806 each carry an N-linked (GlcNAc...) asparagine; by host glycan. Fusion peptide regions lie at residues 922–943 (SAIE…VEAY) and 941–961 (EAYN…VQSF). N-linked (GlcNAc...) asparagine; by host glycosylation occurs at Asn945. Cys946 and Cys957 are disulfide-bonded. The tract at residues 1022–1072 (QKMIASAFNNALGAIQEGFDATNSALGKIQSVVNANAEALNNLLNQLSNRF) is heptad repeat 1. Residues 1051–1095 (QSVVNANAEALNNLLNQLSNRFGAISASLQEILTRLDRVEAKAQI) adopt a coiled-coil conformation. Residues Asn1232, Asn1242, Asn1261, Asn1277, and Asn1298 are each glycosylated (N-linked (GlcNAc...) asparagine; by host). Positions 1266 to 1306 (APDLSLDFEKLNVTFLDLTYEMNRIQDAIKKLNESYINLKE) are heptad repeat 2. The stretch at 1279–1307 (TFLDLTYEMNRIQDAIKKLNESYINLKEV) forms a coiled coil. Residues 1318-1338 (WYVWLLIGLAGVAVCVLLFFI) traverse the membrane as a helical segment. At 1339 to 1376 (CCCTGCGSCCFRKCGSCCDEYGGHQDSIVIYNISAHED) the chain is on the cytoplasmic side. Positions 1372 to 1376 (SAHED) match the KxHxx motif.

Belongs to the betacoronaviruses spike protein family. In terms of assembly, homotrimer; each monomer consists of a S1 and a S2 subunit. The resulting peplomers protrude from the virus surface as spikes. Post-translationally, specific enzymatic cleavages in vivo yield mature proteins. The precursor is processed into S1 and S2 by host cell furin or another cellular protease to yield the mature S1 and S2 proteins. Additionally, a second cleavage leads to the release of a fusion peptide after viral attachment to host cell receptor. In terms of processing, the cytoplasmic Cys-rich domain is palmitoylated. Spike glycoprotein is digested within host endosomes.

Its subcellular location is the virion membrane. The protein resides in the host endoplasmic reticulum-Golgi intermediate compartment membrane. It localises to the host cell membrane. In terms of biological role, attaches the virion to the cell membrane by interacting with host receptor, initiating the infection. Its function is as follows. Mediates fusion of the virion and cellular membranes by acting as a class I viral fusion protein. Under the current model, the protein has at least three conformational states: pre-fusion native state, pre-hairpin intermediate state, and post-fusion hairpin state. During viral and target cell membrane fusion, the coiled coil regions (heptad repeats) assume a trimer-of-hairpins structure, positioning the fusion peptide in close proximity to the C-terminal region of the ectodomain. The formation of this structure appears to drive apposition and subsequent fusion of viral and target cell membranes. Acts as a viral fusion peptide which is unmasked following S2 cleavage occurring upon virus endocytosis. This is Spike glycoprotein from Mus musculus (Mouse).